We begin with the raw amino-acid sequence, 147 residues long: Ribonuclease H (147 aa).

The 142-residue stretch at Met-1 to Ala-142 folds into the RNase H type-1 domain. Positions 9, 47, 69, and 134 each coordinate Mg(2+).

This sequence belongs to the RNase H family. Monomer. Mg(2+) serves as cofactor.

The protein localises to the cytoplasm. The enzyme catalyses Endonucleolytic cleavage to 5'-phosphomonoester.. In terms of biological role, endonuclease that specifically degrades the RNA of RNA-DNA hybrids. This Symbiobacterium thermophilum (strain DSM 24528 / JCM 14929 / IAM 14863 / T) protein is Ribonuclease H.